A 230-amino-acid chain; its full sequence is NNFFQGYNLLFQHSLFASYMDWFHAFNCSLLLGVLVFVTLLFGYLIFSTFYFKSKKIEYQFGELLCSIFPTIILLMQMVPSLSLLYYYGLMNLDSNLTVKVTGHQWYWSYEYSDIPGLEFDSYMKSLDQLNLGEPRLLEVDNRCVIPCDTNIRFCITSADVIHAWALNSLSVKLDAMSGILSTFSYSFPMVGVFYGQCSEICGANHSFMPIALEVTLLDNFKSWCFGTME.

Residues 1 to 29 (NNFFQGYNLLFQHSLFASYMDWFHAFNCS) are Mitochondrial intermembrane-facing. The chain crosses the membrane as a helical span at residues 30–50 (LLLGVLVFVTLLFGYLIFSTF). The Mitochondrial matrix portion of the chain corresponds to 51-63 (YFKSKKIEYQFGE). The helical transmembrane segment at 64 to 84 (LLCSIFPTIILLMQMVPSLSL) threads the bilayer. Over 85-230 (LYYYGLMNLD…FKSWCFGTME (146 aa)) the chain is Mitochondrial intermembrane. Cu cation-binding residues include H163, C198, E200, C202, H206, and M209. Mg(2+) is bound at residue E200.

This sequence belongs to the cytochrome c oxidase subunit 2 family. As to quaternary structure, component of the cytochrome c oxidase (complex IV, CIV), a multisubunit enzyme composed of a catalytic core of 3 subunits and several supernumerary subunits. The complex exists as a monomer or a dimer and forms supercomplexes (SCs) in the inner mitochondrial membrane with ubiquinol-cytochrome c oxidoreductase (cytochrome b-c1 complex, complex III, CIII). The cofactor is Cu cation.

Its subcellular location is the mitochondrion inner membrane. It carries out the reaction 4 Fe(II)-[cytochrome c] + O2 + 8 H(+)(in) = 4 Fe(III)-[cytochrome c] + 2 H2O + 4 H(+)(out). Component of the cytochrome c oxidase, the last enzyme in the mitochondrial electron transport chain which drives oxidative phosphorylation. The respiratory chain contains 3 multisubunit complexes succinate dehydrogenase (complex II, CII), ubiquinol-cytochrome c oxidoreductase (cytochrome b-c1 complex, complex III, CIII) and cytochrome c oxidase (complex IV, CIV), that cooperate to transfer electrons derived from NADH and succinate to molecular oxygen, creating an electrochemical gradient over the inner membrane that drives transmembrane transport and the ATP synthase. Cytochrome c oxidase is the component of the respiratory chain that catalyzes the reduction of oxygen to water. Electrons originating from reduced cytochrome c in the intermembrane space (IMS) are transferred via the dinuclear copper A center (CU(A)) of subunit 2 and heme A of subunit 1 to the active site in subunit 1, a binuclear center (BNC) formed by heme A3 and copper B (CU(B)). The BNC reduces molecular oxygen to 2 water molecules using 4 electrons from cytochrome c in the IMS and 4 protons from the mitochondrial matrix. In Caenorhabditis remanei (Caenorhabditis vulgaris), this protein is Cytochrome c oxidase subunit 2 (cox-2).